We begin with the raw amino-acid sequence, 303 residues long: ASC1-like protein (303 aa).

6 consecutive transmembrane segments (helical) span residues 19–39 (YEDFAVLPLFALFFPSVRFLL), 81–101 (CIYFLSAEVFALVVTYNEPWF), 127–147 (ALYMYTGGFYTYSIFALIFWE), 153–173 (FGVSMSHHVATAILIVLSYNI), 212–232 (YLCLSWIILRLIYYPFWVLWS), and 255–275 (YIFNSLLFCLLVLHIYWWVLI). Residues 72–284 (RKFKESAWKC…IYRMLVKQIQ (213 aa)) form the TLC domain.

It localises to the endoplasmic reticulum membrane. Functionally, mediates resistance to sphinganine-analog mycotoxins (SAMs) by restoring the sphingolipid biosynthesis. Could salvage the transport of GPI-anchored proteins from the endoplasmic reticulum to the Golgi apparatus in ceramides-depleted cells after SAM exposure. The chain is ASC1-like protein from Solanum lycopersicum (Tomato).